Reading from the N-terminus, the 381-residue chain is O-phospho-L-seryl-tRNA:Cys-tRNA synthase (381 aa).

Pyridoxal 5'-phosphate contacts are provided by residues 86 to 87 (AR), Asn-192, and 215 to 217 (SGH). At Lys-218 the chain carries N6-(pyridoxal phosphate)lysine.

The protein belongs to the SepCysS family. As to quaternary structure, homodimer. Interacts with SepRS. The cofactor is pyridoxal 5'-phosphate.

The enzyme catalyses O-phospho-L-seryl-tRNA(Cys) + hydrogen sulfide + H(+) = L-cysteinyl-tRNA(Cys) + phosphate. In terms of biological role, converts O-phospho-L-seryl-tRNA(Cys) (Sep-tRNA(Cys)) to L-cysteinyl-tRNA(Cys) (Cys-tRNA(Cys)). The polypeptide is O-phospho-L-seryl-tRNA:Cys-tRNA synthase (Methanococcus vannielii (strain ATCC 35089 / DSM 1224 / JCM 13029 / OCM 148 / SB)).